Reading from the N-terminus, the 349-residue chain is Biotin synthase (349 aa).

The 228-residue stretch at 60–287 folds into the Radical SAM core domain; sequence GDVELATLLS…KARVRLSAGR (228 aa). [4Fe-4S] cluster-binding residues include cysteine 75, cysteine 79, and cysteine 82. Cysteine 119, cysteine 150, cysteine 210, and arginine 282 together coordinate [2Fe-2S] cluster.

The protein belongs to the radical SAM superfamily. Biotin synthase family. As to quaternary structure, homodimer. [4Fe-4S] cluster serves as cofactor. Requires [2Fe-2S] cluster as cofactor.

It carries out the reaction (4R,5S)-dethiobiotin + (sulfur carrier)-SH + 2 reduced [2Fe-2S]-[ferredoxin] + 2 S-adenosyl-L-methionine = (sulfur carrier)-H + biotin + 2 5'-deoxyadenosine + 2 L-methionine + 2 oxidized [2Fe-2S]-[ferredoxin]. Its pathway is cofactor biosynthesis; biotin biosynthesis; biotin from 7,8-diaminononanoate: step 2/2. Functionally, catalyzes the conversion of dethiobiotin (DTB) to biotin by the insertion of a sulfur atom into dethiobiotin via a radical-based mechanism. This chain is Biotin synthase, found in Albidiferax ferrireducens (strain ATCC BAA-621 / DSM 15236 / T118) (Rhodoferax ferrireducens).